The sequence spans 467 residues: MTMSFQRFGMIEKVLRTIEKYNMIEKDDKIVMGISGGPDSLCMLDVLFNLKGKFNLKLYVVHVNHMIRGEDAKKDAEFVEKLCKDLDLPFFLFEENIPYLAKKMGLSEEQAGRYVRYKAFEETLKRVGGNKIAVAHNKNDVAETVLLNILRGTGLRGLIGIKPVNGNIIRPLIEIERREIEKYLKDKNLHPRIDHTNYEDLYTRNKIRLKVIPYIEEVFKIDLVENLSRMAAILLEEDDYLEAKCEEVFNQICEINGEEIKVDVDALKSQHTAIKRRLVRRMYFYVKGETDGLEYGHVEDVLNLLDKPTSSKIDLPFEIEALKMYNNLVIRKKKTKEKVKFKEVLKIPGVTTIEGIGKFKAYVVDISQVDDFNKGEYIKFFDYDKIKGEIVVKSREDGDRFSPLGMRGTKKLKEFFIDEKIPREERDYIPLVAIGKEIVWVVGYRMSEKFKVDKNTSKVLVIEYTKE.

Residue 35–40 (SGGPDS) coordinates ATP.

It belongs to the tRNA(Ile)-lysidine synthase family.

The protein resides in the cytoplasm. The catalysed reaction is cytidine(34) in tRNA(Ile2) + L-lysine + ATP = lysidine(34) in tRNA(Ile2) + AMP + diphosphate + H(+). Functionally, ligates lysine onto the cytidine present at position 34 of the AUA codon-specific tRNA(Ile) that contains the anticodon CAU, in an ATP-dependent manner. Cytidine is converted to lysidine, thus changing the amino acid specificity of the tRNA from methionine to isoleucine. This is tRNA(Ile)-lysidine synthase from Caldanaerobacter subterraneus subsp. tengcongensis (strain DSM 15242 / JCM 11007 / NBRC 100824 / MB4) (Thermoanaerobacter tengcongensis).